Reading from the N-terminus, the 2181-residue chain is Non-reducing polyketide synthase dpmaA (2181 aa).

Positions 74 to 180 are N-terminal acylcarrier protein transacylase domain (SAT); it reads QWVKGNSTQP…LALCCGAYID (107 aa). The Ketosynthase family 3 (KS3) domain maps to 347–779; sequence QAQLLVLGPV…GTNAAMLVCQ (433 aa). Catalysis depends on for beta-ketoacyl synthase activity residues C525, H661, and H702. The segment at 891 to 1193 is malonyl-CoA:ACP transacylase (MAT) domain; that stretch reads VLAGQTGRRV…SFYPAALGEP (303 aa). The active-site For acyl/malonyl transferase activity is the S977. An N-terminal hotdog fold region spans residues 1269–1401; it reads VSLIGKTQNA…GVITLQEVYS (133 aa). One can recognise a PKS/mFAS DH domain in the interval 1269–1579; sequence VSLIGKTQNA…FQKIAISSLK (311 aa). Positions 1276 to 1573 are product template (PT) domain; it reads QNAGVQTVEY…TILGAKFQKI (298 aa). Positions 1425 to 1579 are C-terminal hotdog fold; that stretch reads SASVVQGDFI…FQKIAISSLK (155 aa). Polar residues predominate over residues 1587–1603; the sequence is GVPQTSGGRTPSSSITE. Disordered stretches follow at residues 1587 to 1618 and 1652 to 1675; these read GVPQTSGGRTPSSSITEFISGDDASPCPPIPG and ISGSSRSTSSSPPSLESRSQAMET. The segment covering 1653-1670 has biased composition (low complexity); sequence SGSSRSTSSSPPSLESRS. The Carrier domain maps to 1677-1753; sequence EITEGAGSAL…TLFHTIFPQQ (77 aa). Residue S1713 is modified to O-(pantetheine 4'-phosphoryl)serine. The segment at 1982 to 2164 is methyltransferase (CMeT) domain; it reads EFMNCLFSYN…QSGFDHIDWT (183 aa).

It participates in secondary metabolite biosynthesis; terpenoid biosynthesis. Non-reducing polyketide synthase; part of the gene cluster that mediates the biosynthesis of the diterpenoid pyrones subglutinols A and B. The first step of the pathway is the synthesis of the alpha-pyrone moiety by the polyketide synthase dpmaA via condensation of one acetyl-CoA starter unit with 3 malonyl-CoA units and 2 methylations. The alpha-pyrone is then combined with geranylgeranyl pyrophosphate (GGPP) formed by the GGPP synthase dpmaD through the action of the prenyltransferase dpmaC to yield a linear alpha-pyrone diterpenoid. Subsequent steps in the diterpenoid pyrone biosynthetic pathway involve the decalin core formation, which is initiated by the epoxidation of the C10-C11 olefin by the FAD-dependent oxidoreductase dpmaE, and is followed by a cyclization cascade catalyzed by the terpene cyclase dpmaB. The dehydrogenase dpmaF is then involved in tetrahydrofuran (THF) ring formation at the C5 unit to complete the formation of subglutinols A and B. The polypeptide is Non-reducing polyketide synthase dpmaA (Metarhizium anisopliae (Entomophthora anisopliae)).